We begin with the raw amino-acid sequence, 280 residues long: Bicarbonate transport system permease protein CmpB (280 aa).

The next 7 membrane-spanning stretches (helical) occupy residues 32–52, 99–119, 126–146, 153–173, 198–218, 219–239, and 251–271; these read PIFG…AGLI, YSLA…QPLL, IFQF…LVAL, AIFV…TEGV, ILIP…IGLA, WLAI…GFFI, and IILA…GIAY. An ABC transmembrane type-1 domain is found at 88–266; it reads TLASLGRVAQ…YIGAVGLLLD (179 aa).

The protein belongs to the binding-protein-dependent transport system permease family. As to quaternary structure, the complex is composed of two ATP-binding proteins (CmpC and CmpD), a transmembrane protein (CmpB) and a solute-binding protein (CmpA).

It is found in the cell inner membrane. Functionally, part of the ABC transporter complex CmpABCD involved in bicarbonate transport. Probably responsible for the translocation of the substrate across the membrane. The polypeptide is Bicarbonate transport system permease protein CmpB (cmpB) (Synechocystis sp. (strain ATCC 27184 / PCC 6803 / Kazusa)).